Here is a 291-residue protein sequence, read N- to C-terminus: tRNA N(3)-cytidine methyltransferase METTL8, mitochondrial (291 aa).

The N-terminal 21 residues, 1 to 21 (MNMIWRNSISCLRLGKVPHRY), are a transit peptide targeting the mitochondrion. Lys-80 is covalently cross-linked (Glycyl lysine isopeptide (Lys-Gly) (interchain with G-Cter in SUMO)). The S-adenosyl-L-methionine site is built by Trp-89 and Tyr-93. The disordered stretch occupies residues 141 to 187 (FSRMHCPTVPDEKNHYEKSSGSSEGQSKTESDFSNLDSEKHKKGPME). Over residues 159–168 (SSGSSEGQSK) the composition is skewed to low complexity. Positions 204, 230, and 256 each coordinate S-adenosyl-L-methionine.

This sequence belongs to the methyltransferase superfamily. METL family. As to quaternary structure, interacts with EP300.

The protein resides in the mitochondrion. It carries out the reaction cytidine(32) in tRNA(Ser) + S-adenosyl-L-methionine = N(3)-methylcytidine(32) in tRNA(Ser) + S-adenosyl-L-homocysteine + H(+). The enzyme catalyses cytidine(32) in tRNA(Thr) + S-adenosyl-L-methionine = N(3)-methylcytidine(32) in tRNA(Thr) + S-adenosyl-L-homocysteine + H(+). It catalyses the reaction a cytidine in mRNA + S-adenosyl-L-methionine = an N(3)-methylcytidine in mRNA + S-adenosyl-L-homocysteine + H(+). Its function is as follows. Mitochondrial S-adenosyl-L-methionine-dependent methyltransferase that mediates N(3)-methylcytidine modification of residue 32 of the tRNA anticodon loop of mitochondrial tRNA(Ser)(UCN) and tRNA(Thr). N(3)-methylcytidine methylation modification regulates mitochondrial translation efficiency and is required for activity of the respiratory chain. N(3)-methylcytidine methylation of mitochondrial tRNA(Ser)(UCN) requires the formation of N(6)-dimethylallyladenosine(37) (i6A37) by TRIT1 as prerequisite. May also mediate N(3)-methylcytidine modification of mRNAs. The existence of N(3)-methylcytidine modification on mRNAs is however unclear, and additional evidences are required to confirm the role of the N(3)-methylcytidine-specific mRNA methyltransferase activity of METTL8 in vivo. This is tRNA N(3)-cytidine methyltransferase METTL8, mitochondrial from Homo sapiens (Human).